We begin with the raw amino-acid sequence, 529 residues long: MSQFSTTTSGDYLMALDAGTGSVRAVIFDLNGNQIAAGQAEWLHLPVPDVPGSMEFDLTTNWKLTCQCIRQALHQANLPASAIRAVAACSMREGIVLYDRSGKPIWACANVDARASREVSELKELYNNGFELEVYQCSGQTLALSAMPRLLWLAHYRPDIYRQAGTLTMISDWLANMLSGELAVDPSNAGTTGMLDLVTRNWQPNLLEMAGLRADILSPVKETGTLLGHVTAEAAQECGLLAGTPVVMGGGDVQLGCLGLGVVQPGQTAVLGGTFWQQVVNLPKPITDPNMNTRINPHVIPGMVQAESISFFTGLTMRWFRDAFCAEEKLLAQRLGIDTYSLLEDMAARVPAGAYGVMPIFSDVMRFKSWYHAAPSFINLSLDPEKCNKATLFRALEENAAIVSACNLAQIAEFSGVKASSVVFAGGGAKGKLWSQILADVTGIPVRVPVVKEATALGCAIAAGVGVGLYEALDKTGEQLVRWEREYQPNIEHKALYQAAKTNWQAVYTDQLTLVDSGLTTSLWKAPGL.

This sequence belongs to the FGGY kinase family.

It localises to the cytoplasm. It catalyses the reaction (S)-4,5-dihydroxypentane-2,3-dione + ATP = (2S)-2-hydroxy-3,4-dioxopentyl phosphate + ADP + H(+). Catalyzes the phosphorylation of autoinducer-2 (AI-2) to phospho-AI-2, which subsequently inactivates the transcriptional regulator LsrR and leads to the transcription of the lsr operon. Phosphorylates the ring-open form of (S)-4,5-dihydroxypentane-2,3-dione (DPD), which is the precursor to all AI-2 signaling molecules, at the C5 position. This is Autoinducer-2 kinase from Yersinia enterocolitica serotype O:8 / biotype 1B (strain NCTC 13174 / 8081).